We begin with the raw amino-acid sequence, 250 residues long: Peptidyl-tRNA hydrolase (250 aa).

Tyr14 contributes to the tRNA binding site. Residue His19 is the Proton acceptor of the active site. The tRNA site is built by Phe64, Asn66, and Asn112. A disordered region spans residues 192–250 (MGDGNQRPGGVKTDPAQLEKAPPKAQSHIRQARQNQKKPNIPESGPMAEMLKKLLGKKD). Over residues 219-229 (HIRQARQNQKK) the composition is skewed to polar residues. The span at 241 to 250 (MLKKLLGKKD) shows a compositional bias: basic and acidic residues.

The protein belongs to the PTH family. In terms of assembly, monomer.

The protein resides in the cytoplasm. It catalyses the reaction an N-acyl-L-alpha-aminoacyl-tRNA + H2O = an N-acyl-L-amino acid + a tRNA + H(+). Hydrolyzes ribosome-free peptidyl-tRNAs (with 1 or more amino acids incorporated), which drop off the ribosome during protein synthesis, or as a result of ribosome stalling. In terms of biological role, catalyzes the release of premature peptidyl moieties from peptidyl-tRNA molecules trapped in stalled 50S ribosomal subunits, and thus maintains levels of free tRNAs and 50S ribosomes. In Brucella suis (strain ATCC 23445 / NCTC 10510), this protein is Peptidyl-tRNA hydrolase.